A 105-amino-acid polypeptide reads, in one-letter code: UPF0145 protein GK1405 (105 aa).

Belongs to the UPF0145 family.

The sequence is that of UPF0145 protein GK1405 from Geobacillus kaustophilus (strain HTA426).